Here is a 516-residue protein sequence, read N- to C-terminus: Apolipoprotein N-acyltransferase (516 aa).

The next 5 helical transmembrane spans lie at 23-43 (ILIL…AFAP), 68-88 (AFWL…RWIY), 94-114 (VAGL…AYLA), 135-155 (WLLA…WVMT), and 178-198 (LGGI…LAML). One can recognise a CN hydrolase domain in the interval 241-481 (AQGNIAQELK…VLTGFAQSRQ (241 aa)). The Proton acceptor role is filled by Glu279. Lys339 is a catalytic residue. Cys391 serves as the catalytic Nucleophile. Residues 489-509 (FGNLPVVLGCGALLLLALLLG) form a helical membrane-spanning segment.

Belongs to the CN hydrolase family. Apolipoprotein N-acyltransferase subfamily.

The protein resides in the cell inner membrane. The catalysed reaction is N-terminal S-1,2-diacyl-sn-glyceryl-L-cysteinyl-[lipoprotein] + a glycerophospholipid = N-acyl-S-1,2-diacyl-sn-glyceryl-L-cysteinyl-[lipoprotein] + a 2-acyl-sn-glycero-3-phospholipid + H(+). Its pathway is protein modification; lipoprotein biosynthesis (N-acyl transfer). Catalyzes the phospholipid dependent N-acylation of the N-terminal cysteine of apolipoprotein, the last step in lipoprotein maturation. The chain is Apolipoprotein N-acyltransferase from Chromobacterium violaceum (strain ATCC 12472 / DSM 30191 / JCM 1249 / CCUG 213 / NBRC 12614 / NCIMB 9131 / NCTC 9757 / MK).